A 284-amino-acid polypeptide reads, in one-letter code: Tryptophan synthase alpha chain (284 aa).

Active-site proton acceptor residues include E55 and D66.

This sequence belongs to the TrpA family. In terms of assembly, tetramer of two alpha and two beta chains.

It carries out the reaction (1S,2R)-1-C-(indol-3-yl)glycerol 3-phosphate + L-serine = D-glyceraldehyde 3-phosphate + L-tryptophan + H2O. It participates in amino-acid biosynthesis; L-tryptophan biosynthesis; L-tryptophan from chorismate: step 5/5. Functionally, the alpha subunit is responsible for the aldol cleavage of indoleglycerol phosphate to indole and glyceraldehyde 3-phosphate. In Methanococcus voltae, this protein is Tryptophan synthase alpha chain.